A 211-amino-acid polypeptide reads, in one-letter code: Pyridoxine/pyridoxamine 5'-phosphate oxidase (211 aa).

Substrate is bound by residues 7–10 and K65; that span reads RREY. FMN contacts are provided by residues 60 to 65, 75 to 76, R81, K82, and Q104; these read RIVLLK and YT. 3 residues coordinate substrate: Y122, R126, and S130. Residues 139-140 and W184 contribute to the FMN site; that span reads QS. 190–192 serves as a coordination point for substrate; that stretch reads RLH. R194 serves as a coordination point for FMN.

Belongs to the pyridoxamine 5'-phosphate oxidase family. Homodimer. FMN is required as a cofactor.

It carries out the reaction pyridoxamine 5'-phosphate + O2 + H2O = pyridoxal 5'-phosphate + H2O2 + NH4(+). The catalysed reaction is pyridoxine 5'-phosphate + O2 = pyridoxal 5'-phosphate + H2O2. It participates in cofactor metabolism; pyridoxal 5'-phosphate salvage; pyridoxal 5'-phosphate from pyridoxamine 5'-phosphate: step 1/1. The protein operates within cofactor metabolism; pyridoxal 5'-phosphate salvage; pyridoxal 5'-phosphate from pyridoxine 5'-phosphate: step 1/1. Catalyzes the oxidation of either pyridoxine 5'-phosphate (PNP) or pyridoxamine 5'-phosphate (PMP) into pyridoxal 5'-phosphate (PLP). The chain is Pyridoxine/pyridoxamine 5'-phosphate oxidase from Vibrio campbellii (strain ATCC BAA-1116).